Reading from the N-terminus, the 843-residue chain is Protein translocase subunit SecA (843 aa).

Residues glutamine 85, 103–107, and aspartate 490 each bind ATP; that span reads GEGKT. The interval 799-834 is disordered; it reads KNAVENRSDDSLPKQPVKAEPRVGRNDPCPCGSGKK. Residues 802-823 show a composition bias toward basic and acidic residues; sequence VENRSDDSLPKQPVKAEPRVGR. Residues cysteine 827, cysteine 829, cysteine 838, and cysteine 839 each coordinate Zn(2+).

The protein belongs to the SecA family. Monomer and homodimer. Part of the essential Sec protein translocation apparatus which comprises SecA, SecYEG and auxiliary proteins SecDF. Other proteins may also be involved. The cofactor is Zn(2+).

It is found in the cell membrane. The protein localises to the cytoplasm. It catalyses the reaction ATP + H2O + cellular proteinSide 1 = ADP + phosphate + cellular proteinSide 2.. Part of the Sec protein translocase complex. Interacts with the SecYEG preprotein conducting channel. Has a central role in coupling the hydrolysis of ATP to the transfer of proteins into and across the cell membrane, serving as an ATP-driven molecular motor driving the stepwise translocation of polypeptide chains across the membrane. The chain is Protein translocase subunit SecA from Heliobacterium modesticaldum (strain ATCC 51547 / Ice1).